The following is a 376-amino-acid chain: Alpha-centractin (376 aa).

N-acetylmethionine is present on Met1.

It belongs to the actin family. ARP1 subfamily. Part of the ACTR1A/ACTB filament around which the dynactin complex is built. The filament contains 8 copies of ACTR1A and 1 ACTB. Interacts with dynein and adapters such as BICD2. Interacts with BCCIP (isoform 2/alpha).

Its subcellular location is the cytoplasm. It localises to the cytoskeleton. It is found in the microtubule organizing center. The protein resides in the centrosome. The protein localises to the cell cortex. In terms of biological role, part of the ACTR1A/ACTB filament around which the dynactin complex is built. The dynactin multiprotein complex activates the molecular motor dynein for ultra-processive transport along microtubules. This is Alpha-centractin (ACTR1A) from Canis lupus familiaris (Dog).